Reading from the N-terminus, the 140-residue chain is MAIQRTFSIIKPDATARNLTGAINAKIEAAGLRIIAQKRIRLSREQAEGFYGVHKERPFFNDLVTFMISGPVVVQVLEGEDAIAKYRTVMGATNPEQADAGTIRKDFAESIEANSVHGSDAPETAAEEIPFFFSDDEIVG.

Residues K11, F59, R87, T93, R104, and N114 each coordinate ATP. The active-site Pros-phosphohistidine intermediate is the H117.

This sequence belongs to the NDK family. Homotetramer. Requires Mg(2+) as cofactor.

Its subcellular location is the cytoplasm. It catalyses the reaction a 2'-deoxyribonucleoside 5'-diphosphate + ATP = a 2'-deoxyribonucleoside 5'-triphosphate + ADP. The enzyme catalyses a ribonucleoside 5'-diphosphate + ATP = a ribonucleoside 5'-triphosphate + ADP. In terms of biological role, major role in the synthesis of nucleoside triphosphates other than ATP. The ATP gamma phosphate is transferred to the NDP beta phosphate via a ping-pong mechanism, using a phosphorylated active-site intermediate. In Maricaulis maris (strain MCS10) (Caulobacter maris), this protein is Nucleoside diphosphate kinase.